A 283-amino-acid chain; its full sequence is Thymidylate synthase (283 aa).

R22 lines the dUMP pocket. The active-site Nucleophile is the C160. Residues 180–183, N191, and 221–223 contribute to the dUMP site; these read RSCD and HIY. Residue D183 participates in (6R)-5,10-methylene-5,6,7,8-tetrahydrofolate binding. Residue S282 participates in (6R)-5,10-methylene-5,6,7,8-tetrahydrofolate binding.

The protein belongs to the thymidylate synthase family. Bacterial-type ThyA subfamily. In terms of assembly, homodimer.

The protein localises to the cytoplasm. The enzyme catalyses dUMP + (6R)-5,10-methylene-5,6,7,8-tetrahydrofolate = 7,8-dihydrofolate + dTMP. The protein operates within pyrimidine metabolism; dTTP biosynthesis. Its function is as follows. Catalyzes the reductive methylation of 2'-deoxyuridine-5'-monophosphate (dUMP) to 2'-deoxythymidine-5'-monophosphate (dTMP) while utilizing 5,10-methylenetetrahydrofolate (mTHF) as the methyl donor and reductant in the reaction, yielding dihydrofolate (DHF) as a by-product. This enzymatic reaction provides an intracellular de novo source of dTMP, an essential precursor for DNA biosynthesis. This chain is Thymidylate synthase, found in Haemophilus influenzae (strain PittGG).